Reading from the N-terminus, the 146-residue chain is Universal stress protein MT1672 (146 aa).

Belongs to the universal stress protein A family.

The polypeptide is Universal stress protein MT1672 (Mycobacterium tuberculosis (strain CDC 1551 / Oshkosh)).